We begin with the raw amino-acid sequence, 614 residues long: Phosphomethylpyrimidine synthase (614 aa).

Residues asparagine 226, methionine 255, tyrosine 284, histidine 320, 340–342 (SRG), 381–384 (DGLR), and glutamate 420 each bind substrate. Histidine 424 is a Zn(2+) binding site. Position 447 (tyrosine 447) interacts with substrate. Histidine 488 is a Zn(2+) binding site. Cysteine 568, cysteine 571, and cysteine 576 together coordinate [4Fe-4S] cluster.

Belongs to the ThiC family. As to quaternary structure, homodimer. [4Fe-4S] cluster is required as a cofactor.

The enzyme catalyses 5-amino-1-(5-phospho-beta-D-ribosyl)imidazole + S-adenosyl-L-methionine = 4-amino-2-methyl-5-(phosphooxymethyl)pyrimidine + CO + 5'-deoxyadenosine + formate + L-methionine + 3 H(+). It participates in cofactor biosynthesis; thiamine diphosphate biosynthesis. Catalyzes the synthesis of the hydroxymethylpyrimidine phosphate (HMP-P) moiety of thiamine from aminoimidazole ribotide (AIR) in a radical S-adenosyl-L-methionine (SAM)-dependent reaction. The polypeptide is Phosphomethylpyrimidine synthase (Acidovorax ebreus (strain TPSY) (Diaphorobacter sp. (strain TPSY))).